A 426-amino-acid chain; its full sequence is Endoglucanase (426 aa).

The first 19 residues, 1–19 (MRRCMPLVAASVAALMLAG), serve as a signal peptide directing secretion. Cys20 carries N-palmitoyl cysteine lipidation. Cys20 carries the S-diacylglycerol cysteine lipid modification. Positions 20 to 45 (CGGGDGDPSLSTASVSATDTTTLKPA) are excised as a propeptide. Residue Glu249 is the Proton donor of the active site. Glu361 (nucleophile) is an active-site residue.

This sequence belongs to the glycosyl hydrolase 5 (cellulase A) family.

It is found in the cell membrane. The enzyme catalyses Endohydrolysis of (1-&gt;4)-beta-D-glucosidic linkages in cellulose, lichenin and cereal beta-D-glucans.. This chain is Endoglucanase (egl), found in Ralstonia solanacearum (Pseudomonas solanacearum).